Consider the following 356-residue polypeptide: Ferrochelatase (356 aa).

H214 and E295 together coordinate Fe cation.

It belongs to the ferrochelatase family.

It localises to the cytoplasm. The catalysed reaction is heme b + 2 H(+) = protoporphyrin IX + Fe(2+). The protein operates within porphyrin-containing compound metabolism; protoheme biosynthesis; protoheme from protoporphyrin-IX: step 1/1. Catalyzes the ferrous insertion into protoporphyrin IX. The protein is Ferrochelatase of Paraburkholderia phymatum (strain DSM 17167 / CIP 108236 / LMG 21445 / STM815) (Burkholderia phymatum).